Reading from the N-terminus, the 267-residue chain is tRNA pseudouridine synthase A (267 aa).

Asp-51 acts as the Nucleophile in catalysis. Tyr-109 contacts substrate.

The protein belongs to the tRNA pseudouridine synthase TruA family. Homodimer.

It carries out the reaction uridine(38/39/40) in tRNA = pseudouridine(38/39/40) in tRNA. Formation of pseudouridine at positions 38, 39 and 40 in the anticodon stem and loop of transfer RNAs. The sequence is that of tRNA pseudouridine synthase A from Staphylococcus carnosus (strain TM300).